The primary structure comprises 298 residues: 4-hydroxy-tetrahydrodipicolinate synthase (298 aa).

Residue Thr48 participates in pyruvate binding. Residue Tyr137 is the Proton donor/acceptor of the active site. Lys166 functions as the Schiff-base intermediate with substrate in the catalytic mechanism. Ile207 is a pyruvate binding site.

It belongs to the DapA family. As to quaternary structure, homotetramer; dimer of dimers.

It is found in the cytoplasm. The catalysed reaction is L-aspartate 4-semialdehyde + pyruvate = (2S,4S)-4-hydroxy-2,3,4,5-tetrahydrodipicolinate + H2O + H(+). It functions in the pathway amino-acid biosynthesis; L-lysine biosynthesis via DAP pathway; (S)-tetrahydrodipicolinate from L-aspartate: step 3/4. Functionally, catalyzes the condensation of (S)-aspartate-beta-semialdehyde [(S)-ASA] and pyruvate to 4-hydroxy-tetrahydrodipicolinate (HTPA). In Campylobacter jejuni subsp. jejuni serotype O:2 (strain ATCC 700819 / NCTC 11168), this protein is 4-hydroxy-tetrahydrodipicolinate synthase.